The primary structure comprises 518 residues: OTU domain-containing protein 5 (518 aa).

2 disordered regions span residues 1-79 and 105-144; these read MTIL…SGGA and PGHSKRRRQGVSAGPGAPGSSPDREDGAGNNSEDEYETAA. Pro residues predominate over residues 39-53; it reads SSPPPRWAYPGNPAP. The segment covering 116–125 has biased composition (low complexity); the sequence is SAGPGAPGSS. The region spanning 171–294 is the OTU domain; sequence FIIKQMKEDG…NIHYNSVVNP (124 aa). The tract at residues 176 to 182 is cys-loop; sequence MKEDGAC. Residue D179 is part of the active site. The Nucleophile role is filled by C182. Residues 231 to 241 are variable-loop; sequence KRKNNCHGNHI. A his-loop region spans residues 282-287; it reads YHRNIH. Residue H287 is part of the active site. The segment at 371–450 is disordered; sequence ARQPRKASAT…GPSNQTCAGA (80 aa). Residues 377–390 show a composition bias toward low complexity; sequence ASATCSSATAAASS.

This sequence belongs to the peptidase C85 family.

It carries out the reaction Thiol-dependent hydrolysis of ester, thioester, amide, peptide and isopeptide bonds formed by the C-terminal Gly of ubiquitin (a 76-residue protein attached to proteins as an intracellular targeting signal).. Deubiquitinating enzyme that may function as negative regulator of the innate immune system. Has peptidase activity towards 'Lys-48'- and 'Lys-63'-linked polyubiquitin chains. Can also cleave 'Lys-11'-linked ubiquitin chains (in vitro). The sequence is that of OTU domain-containing protein 5 (otud5) from Xenopus tropicalis (Western clawed frog).